The sequence spans 296 residues: Mycothiol acetyltransferase (296 aa).

N-acetyltransferase domains lie at 1-148 (MTEW…IRVD) and 151-296 (VTVR…YGRA). A 1D-myo-inositol 2-(L-cysteinylamino)-2-deoxy-alpha-D-glucopyranoside-binding site is contributed by glutamate 34. Acetyl-CoA-binding positions include 79–81 (LVV) and 87–92 (RRGIGS). Residues glutamate 178, lysine 219, and glutamate 229 each coordinate 1D-myo-inositol 2-(L-cysteinylamino)-2-deoxy-alpha-D-glucopyranoside. Acetyl-CoA contacts are provided by residues 233 to 235 (VGV) and 240 to 246 (QGRGLGH). A 1D-myo-inositol 2-(L-cysteinylamino)-2-deoxy-alpha-D-glucopyranoside-binding site is contributed by tyrosine 267. 272-277 (NQAALR) is a binding site for acetyl-CoA.

The protein belongs to the acetyltransferase family. MshD subfamily. In terms of assembly, monomer.

The catalysed reaction is 1D-myo-inositol 2-(L-cysteinylamino)-2-deoxy-alpha-D-glucopyranoside + acetyl-CoA = mycothiol + CoA + H(+). Its function is as follows. Catalyzes the transfer of acetyl from acetyl-CoA to desacetylmycothiol (Cys-GlcN-Ins) to form mycothiol. The polypeptide is Mycothiol acetyltransferase (Mycobacteroides abscessus (strain ATCC 19977 / DSM 44196 / CCUG 20993 / CIP 104536 / JCM 13569 / NCTC 13031 / TMC 1543 / L948) (Mycobacterium abscessus)).